The chain runs to 238 residues: 2,3,4,5-tetrahydropyridine-2,6-dicarboxylate N-acetyltransferase (238 aa).

This sequence belongs to the transferase hexapeptide repeat family. DapH subfamily.

It carries out the reaction (S)-2,3,4,5-tetrahydrodipicolinate + acetyl-CoA + H2O = L-2-acetamido-6-oxoheptanedioate + CoA. It participates in amino-acid biosynthesis; L-lysine biosynthesis via DAP pathway; LL-2,6-diaminopimelate from (S)-tetrahydrodipicolinate (acetylase route): step 1/3. Its function is as follows. Catalyzes the transfer of an acetyl group from acetyl-CoA to tetrahydrodipicolinate. This chain is 2,3,4,5-tetrahydropyridine-2,6-dicarboxylate N-acetyltransferase, found in Thermotoga neapolitana (strain ATCC 49049 / DSM 4359 / NBRC 107923 / NS-E).